We begin with the raw amino-acid sequence, 358 residues long: Ion-translocating oxidoreductase complex subunit D (358 aa).

Helical transmembrane passes span 19-39 (IMLWVILAMMPAFFTQIYYFG), 41-61 (GVLLQSALAIGTAIIAEFIAI), 79-99 (LTALILAMAIPPYAPYWVIII), and 125-145 (IGYVILLISFPLQMTTWMPPI). FMN phosphoryl threonine is present on T186. The next 5 helical transmembrane spans lie at 220–240 (FAQGWWQINVAFLAGGIFLIL), 248–268 (IPVAMLVTFFCLATATAFTGF), 271–291 (LSAISQLVSGAMMFGAFFIAT), 297–317 (SITPRGKIIFGALVGLFVYLI), and 321–341 (GNYPDGVAFAILLSNICVPLI).

Belongs to the NqrB/RnfD family. In terms of assembly, the complex is composed of six subunits: RnfA, RnfB, RnfC, RnfD, RnfE and RnfG. The cofactor is FMN.

The protein resides in the cell inner membrane. Part of a membrane-bound complex that couples electron transfer with translocation of ions across the membrane. The sequence is that of Ion-translocating oxidoreductase complex subunit D from Haemophilus influenzae (strain PittEE).